We begin with the raw amino-acid sequence, 595 residues long: UvrABC system protein C (595 aa).

A GIY-YIG domain is found at 17-94 (FEPGCYLMKD…IKQYQPRYNI (78 aa)). A UVR domain is found at 199 to 234 (KTIIKNLESRMQAASENLEFEQAKEYRDLIQNIHNL).

Belongs to the UvrC family. In terms of assembly, interacts with UvrB in an incision complex.

Its subcellular location is the cytoplasm. In terms of biological role, the UvrABC repair system catalyzes the recognition and processing of DNA lesions. UvrC both incises the 5' and 3' sides of the lesion. The N-terminal half is responsible for the 3' incision and the C-terminal half is responsible for the 5' incision. The protein is UvrABC system protein C of Staphylococcus carnosus (strain TM300).